The sequence spans 216 residues: Probable flavin-dependent thymidylate synthase (216 aa).

The 216-residue stretch at 1-216 (MSAKLISVTK…PSIAKALDWV (216 aa)) folds into the ThyX domain. Residues S55, 78 to 80 (RHR), and E86 contribute to the FAD site. DUMP contacts are provided by residues 75–78 (QVLR), 86–90 (EFSQR), and R155. Residues 78-88 (RHRSFHFQEFS) carry the ThyX motif motif. H177 is an FAD binding site. Position 182 (R182) interacts with dUMP. The active-site Involved in ionization of N3 of dUMP, leading to its activation is the R182.

Belongs to the thymidylate synthase ThyX family. In terms of assembly, homotetramer. The cofactor is FAD.

The catalysed reaction is dUMP + (6R)-5,10-methylene-5,6,7,8-tetrahydrofolate + NADPH + H(+) = dTMP + (6S)-5,6,7,8-tetrahydrofolate + NADP(+). The protein operates within pyrimidine metabolism; dTTP biosynthesis. Its function is as follows. Catalyzes the reductive methylation of 2'-deoxyuridine-5'-monophosphate (dUMP) to 2'-deoxythymidine-5'-monophosphate (dTMP) while utilizing 5,10-methylenetetrahydrofolate (mTHF) as the methyl donor, and NADPH and FADH(2) as the reductant. This chain is Probable flavin-dependent thymidylate synthase, found in Paramecium bursaria Chlorella virus 1 (PBCV-1).